Reading from the N-terminus, the 331-residue chain is Ketol-acid reductoisomerase (NADP(+)) (331 aa).

Residues 2–181 (IKKYYESDAD…GATRAVVFET (180 aa)) enclose the KARI N-terminal Rossmann domain. Residues 25 to 28 (YGSQ), arginine 48, serine 52, and 82 to 85 (DESQ) contribute to the NADP(+) site. The active site involves histidine 107. NADP(+) is bound at residue glycine 133. The 146-residue stretch at 182–327 (TFREETETDL…AEIRGLMPQF (146 aa)) folds into the KARI C-terminal knotted domain. Residues aspartate 190, glutamate 194, glutamate 226, and glutamate 230 each coordinate Mg(2+). Residue serine 251 participates in substrate binding.

This sequence belongs to the ketol-acid reductoisomerase family. Mg(2+) is required as a cofactor.

It catalyses the reaction (2R)-2,3-dihydroxy-3-methylbutanoate + NADP(+) = (2S)-2-acetolactate + NADPH + H(+). The catalysed reaction is (2R,3R)-2,3-dihydroxy-3-methylpentanoate + NADP(+) = (S)-2-ethyl-2-hydroxy-3-oxobutanoate + NADPH + H(+). It functions in the pathway amino-acid biosynthesis; L-isoleucine biosynthesis; L-isoleucine from 2-oxobutanoate: step 2/4. It participates in amino-acid biosynthesis; L-valine biosynthesis; L-valine from pyruvate: step 2/4. In terms of biological role, involved in the biosynthesis of branched-chain amino acids (BCAA). Catalyzes an alkyl-migration followed by a ketol-acid reduction of (S)-2-acetolactate (S2AL) to yield (R)-2,3-dihydroxy-isovalerate. In the isomerase reaction, S2AL is rearranged via a Mg-dependent methyl migration to produce 3-hydroxy-3-methyl-2-ketobutyrate (HMKB). In the reductase reaction, this 2-ketoacid undergoes a metal-dependent reduction by NADPH to yield (R)-2,3-dihydroxy-isovalerate. In Methanosphaerula palustris (strain ATCC BAA-1556 / DSM 19958 / E1-9c), this protein is Ketol-acid reductoisomerase (NADP(+)).